A 1061-amino-acid chain; its full sequence is MPTSADDSLPLEDSEECDAYIAKFLRPRTHLFSTVKQEKQRRESHDNKYETAVRSKAIMPSQASKVYRKEMFYSTSKCDSRFINNLHTFNTFDGGSGYSEASPHYAMDFVKNKGFADDEMAGHLKSLEVSRKMTENVKWLNDNRNDLKTALRRSNSCPEFPIDRDREKITTLRRNEKRNENAKISNFDASFVPELCCSDDYPSILCSIATAFKTVVSRVNAQSIGSGELKIAKVLCSTEDLFAYVIPKRFNTRDALFAFSNQFRAWLEYKPNVQLYTHYRFINVILYLEEFKHERTEFRRARHVCNLKSRRNHGLFLELDTGMLRVVEITPEKVRFLANSWAHNPSAIVEVRFDGVKNEKDISEEIQAIRNTGRATMISFDREHREHMNGKWPNPRTWSSLGTVVLRRECTHHKDHSKPPLTRLFCEDRDCIGLCSTGDYFKVPIPEEPNPSHDKLVELRARFASERTLGYTDRTPIAAYILPNTDAHQNELIPDFFSRVQFLNGYSGPSGLAIITLNEAMFWVDNGLLKSAESQVDDRSWTVKEYQSVEEVINWLAKILPPKSKVGFDPTLVSYTWHQQALQSMTSDRFELVAIPGNIVDEIWRMRPFQRGDVVKMLDKNTPEIPVHVKIDRLRKSLKPNKCLAAVITSLEDIMWLLNIRGNDLPYNPVTYSYLFITMSDVRLFIDAKRLNDVSKAYFARQSIDVDDYKAASPYIYDWISATKSSFADKKILISPETNYLIGRLIGEDHSMIDPSIMERIKKIKNTDQLKGMRASNLRDSIAIVEFLCKFEKERRDGYTFTEYELAADIEEVKTRNREYIGLKQPTIFSAGEHSSVHAHRPDAQKIVFHYQQFMFQTGSHYTDGATNCARTIWDSYPTEEFMNQYTLVLKGHIRLASASFPKTLTYGSRLDIFARIALWDAGLDYDHETGHSVGHFLNIRDTQIVIGREPYSSNSIIEAGQVMTIEPGYYSEGMYGIRIGNCYETVDVTLSQNDQYFLRFEPLTLIPIQTSIVNKDLLTSEEINWLNKYHFKVFSKIGYILRKENRMEEYDWLFNACQPI.

It belongs to the peptidase M24B family. As to quaternary structure, may interact with pid-2, app-1 and prmt-5.

It localises to the cytoplasm. The protein localises to the perinuclear region. Its subcellular location is the P-body. Its function is as follows. Together with pid-4, it is involved in gene silencing mediated by a class of 21 nucleotide PIWI-interacting RNAs (piRNAs) that possess a uracil residue at the 5'-end (also called 21U-RNAs) and guide the Piwi protein prg-1 to its DNA targets for silencing. Together with pid-4, it is required for the biogenesis of secondary and tertiary 22G-siRNAs. Specifically, promotes the production of 22G-siRNAs from the 5' end of target mRNAs. Together with pid-4, plays a role in small RNA-directed transgenerational epigenetic inheritance (also called RNAe) over several generations and germline immortality. Together with pid-4, plays a role in the formation of liquid-like condensates in the cytoplasm called Z granules. The protein is Protein pid-5 of Caenorhabditis elegans.